A 509-amino-acid polypeptide reads, in one-letter code: Tyrosine-protein kinase STK (509 aa).

The segment covering 1–16 (MGPCCSKQTKALNNQP) has biased composition (polar residues). A disordered region spans residues 1–23 (MGPCCSKQTKALNNQPDKSKSKD). The N-myristoyl glycine moiety is linked to residue Gly2. The SH3 domain occupies 59–120 (PGVTIFVALY…PSTYVAPEKS (62 aa)). The SH2 domain occupies 126–218 (WYFGDVKRAE…GLVCALTLPC (93 aa)). One can recognise a Protein kinase domain in the interval 240–495 (LRLNRKLGAG…LQGVLEDYFV (256 aa)). ATP-binding positions include 246–254 (LGAGQFGEV) and Lys268. The active-site Proton acceptor is Asp360. Tyr390 is modified (phosphotyrosine; by autocatalysis).

The protein belongs to the protein kinase superfamily. Tyr protein kinase family. SRC subfamily.

It catalyses the reaction L-tyrosyl-[protein] + ATP = O-phospho-L-tyrosyl-[protein] + ADP + H(+). The polypeptide is Tyrosine-protein kinase STK (STK) (Hydra vulgaris (Hydra)).